A 124-amino-acid chain; its full sequence is Iron-sulfur cluster insertion protein ErpA (124 aa).

Iron-sulfur cluster is bound by residues cysteine 52, cysteine 116, and cysteine 118.

It belongs to the HesB/IscA family. Homodimer. Iron-sulfur cluster is required as a cofactor.

Required for insertion of 4Fe-4S clusters for at least IspG. This Vibrio atlanticus (strain LGP32) (Vibrio splendidus (strain Mel32)) protein is Iron-sulfur cluster insertion protein ErpA.